Here is a 369-residue protein sequence, read N- to C-terminus: Chaperone protein DnaJ (369 aa).

Residues Asp7 to Gly73 enclose the J domain. The CR-type zinc finger occupies Gly143–Lys225. Cys156, Cys159, Cys173, Cys176, Cys199, Cys202, Cys213, and Cys216 together coordinate Zn(2+). CXXCXGXG motif repeat units lie at residues Cys156 to Gly163, Cys173 to Gly180, Cys199 to Gly206, and Cys213 to Gly220.

It belongs to the DnaJ family. In terms of assembly, homodimer. Zn(2+) is required as a cofactor.

The protein resides in the cytoplasm. Participates actively in the response to hyperosmotic and heat shock by preventing the aggregation of stress-denatured proteins and by disaggregating proteins, also in an autonomous, DnaK-independent fashion. Unfolded proteins bind initially to DnaJ; upon interaction with the DnaJ-bound protein, DnaK hydrolyzes its bound ATP, resulting in the formation of a stable complex. GrpE releases ADP from DnaK; ATP binding to DnaK triggers the release of the substrate protein, thus completing the reaction cycle. Several rounds of ATP-dependent interactions between DnaJ, DnaK and GrpE are required for fully efficient folding. Also involved, together with DnaK and GrpE, in the DNA replication of plasmids through activation of initiation proteins. The protein is Chaperone protein DnaJ of Thermotoga maritima (strain ATCC 43589 / DSM 3109 / JCM 10099 / NBRC 100826 / MSB8).